An 809-amino-acid polypeptide reads, in one-letter code: Ribonuclease Z 1 (809 aa).

The disordered stretch occupies residues 74–93; that stretch reads ISSPDTYDSSSSSSTTSVSD.

It belongs to the RNase Z family. Zn(2+) serves as cofactor.

The protein localises to the nucleus. The protein resides in the cytoplasm. The enzyme catalyses Endonucleolytic cleavage of RNA, removing extra 3' nucleotides from tRNA precursor, generating 3' termini of tRNAs. A 3'-hydroxy group is left at the tRNA terminus and a 5'-phosphoryl group is left at the trailer molecule.. In terms of biological role, zinc phosphodiesterase, which displays some tRNA 3'-processing endonuclease activity. May be involved in tRNA maturation, by removing a 3'-trailer from precursor tRNA. The sequence is that of Ribonuclease Z 1 (trz1) from Schizosaccharomyces pombe (strain 972 / ATCC 24843) (Fission yeast).